The primary structure comprises 1294 residues: Leucine-rich repeat receptor protein kinase MSP1 (1294 aa).

Residues M1–A22 form the signal peptide. 5 LRR repeats span residues F88–L112, Q113–L136, M138–L160, Q161–L184, and N186–N207. 3 N-linked (GlcNAc...) asparagine glycosylation sites follow: N198, N207, and N220. LRR repeat units lie at residues L232–L256, N258–L280, Q282–L304, S305–L328, N330–C352, K353–L376, A378–W400, K401–L422, Q423–A446, N447–G469, T471–E493, L494–S517, T519–L541, S542–L565, R566–C589, K591–L613, T614–G637, L649–C673, M675–L697, T698–L721, V722–I745, L746–N770, and Y772–G794. 2 N-linked (GlcNAc...) asparagine glycosylation sites follow: N330 and N359. 2 N-linked (GlcNAc...) asparagine glycosylation sites follow: N458 and N472. N-linked (GlcNAc...) asparagine glycosylation is found at N567, N570, and N601. N-linked (GlcNAc...) asparagine glycans are attached at residues N687, N699, and N704. 3 N-linked (GlcNAc...) asparagine glycosylation sites follow: N805, N821, and N832. LRR repeat units follow at residues F822–L846 and S848–I870. A helical membrane pass occupies residues I917 to L937. The region spanning F1002–E1282 is the Protein kinase domain. ATP contacts are provided by residues I1008 to V1016 and K1030. The Proton acceptor role is filled by D1129.

This sequence belongs to the protein kinase superfamily. Ser/Thr protein kinase family. Interacts with TDL1A. Expressed in anthers and ovules during meiosis.

The protein resides in the cell membrane. The catalysed reaction is L-seryl-[protein] + ATP = O-phospho-L-seryl-[protein] + ADP + H(+). The enzyme catalyses L-threonyl-[protein] + ATP = O-phospho-L-threonyl-[protein] + ADP + H(+). Receptor-like kinase that plays important roles in restricting the number of cells entering into male and female sporogenesis. Involved in cell specification during anther development and initiation of anther wall formation. This chain is Leucine-rich repeat receptor protein kinase MSP1, found in Oryza sativa subsp. japonica (Rice).